Here is a 748-residue protein sequence, read N- to C-terminus: 5-methyltetrahydropteroyltriglutamate--homocysteine methyltransferase (748 aa).

5-methyltetrahydropteroyltri-L-glutamate is bound by residues 18-21 (REWK) and Lys112. L-homocysteine contacts are provided by residues 420–422 (IGS) and Glu473. L-methionine is bound by residues 420-422 (IGS) and Glu473. Residue Trp550 participates in 5-methyltetrahydropteroyltri-L-glutamate binding. An L-homocysteine-binding site is contributed by Asp588. Asp588 serves as a coordination point for L-methionine. Position 594 (Glu594) interacts with 5-methyltetrahydropteroyltri-L-glutamate. His630, Cys632, and Glu654 together coordinate Zn(2+). His683 functions as the Proton donor in the catalytic mechanism. Cys715 contacts Zn(2+).

The protein belongs to the vitamin-B12 independent methionine synthase family. The cofactor is Zn(2+).

The enzyme catalyses 5-methyltetrahydropteroyltri-L-glutamate + L-homocysteine = tetrahydropteroyltri-L-glutamate + L-methionine. The protein operates within amino-acid biosynthesis; L-methionine biosynthesis via de novo pathway; L-methionine from L-homocysteine (MetE route): step 1/1. Its function is as follows. Catalyzes the transfer of a methyl group from 5-methyltetrahydrofolate to homocysteine resulting in methionine formation. This chain is 5-methyltetrahydropteroyltriglutamate--homocysteine methyltransferase, found in Staphylococcus epidermidis (strain ATCC 35984 / DSM 28319 / BCRC 17069 / CCUG 31568 / BM 3577 / RP62A).